The chain runs to 79 residues: Large ribosomal subunit protein bL28 (79 aa).

The protein belongs to the bacterial ribosomal protein bL28 family.

This Blochmanniella floridana protein is Large ribosomal subunit protein bL28.